Reading from the N-terminus, the 87-residue chain is Protein L (87 aa).

In terms of biological role, this protein inhibits the multiplication of double-stranded DNA phages, such as P1 and lambda. The sequence is that of Protein L (L) from Escherichia coli.